The primary structure comprises 262 residues: E3 ubiquitin-protein ligase NEURL3 (262 aa).

Positions 17–173 constitute an NHR domain; sequence ALRFHAEAKG…TTKAIELLDP (157 aa). Residues 202–241 form an RING-type zinc finger; sequence CAICFYHAANTRLVPCGHTYFCRYCAWRVFSDTAKCPVCR.

(Microbial infection) Interacts with hepatitis C virus protein E1; this interaction prevents E1 interaction with E2 and subsequently inhibits viral infection.

The protein localises to the cytoplasm. The enzyme catalyses S-ubiquitinyl-[E2 ubiquitin-conjugating enzyme]-L-cysteine + [acceptor protein]-L-lysine = [E2 ubiquitin-conjugating enzyme]-L-cysteine + N(6)-ubiquitinyl-[acceptor protein]-L-lysine.. The protein operates within protein modification; protein ubiquitination. In terms of biological role, E3 ubiquitin-protein ligase that plays a role in various biological processes such as lung development or innate immunity. Seems to utilize UBE2E1. Promotes innate antiviral response by catalyzing 'Lys-63'-linked ubiquitination of IRF7. Also inhibits hepatitis C virus assembly by directly binding to viral E1 envelope glycoprotein to disrupt its interaction with E2. Plays an essential role in TLR4-mediated activation of MAPK pathways by promoting 'Lys-48'-linked polyubiquitination of the phosphatase DUSP1/MKP1. The polypeptide is E3 ubiquitin-protein ligase NEURL3 (NEURL3) (Homo sapiens (Human)).